Consider the following 95-residue polypeptide: Histone-like DNA-binding protein (95 aa).

Belongs to the bacterial histone-like protein family.

The chain is Histone-like DNA-binding protein from Rickettsia rickettsii.